The chain runs to 716 residues: Probable extracellular serine carboxypeptidase (716 aa).

The signal sequence occupies residues 1-17 (MVKLTACLLLLVAAVQA). N-linked (GlcNAc...) asparagine glycans are attached at residues N143 and N174. S188 functions as the Charge relay system in the catalytic mechanism. N258 and N354 each carry an N-linked (GlcNAc...) asparagine glycan. The active-site Charge relay system is D466. N507 and N550 each carry an N-linked (GlcNAc...) asparagine glycan. The disordered stretch occupies residues 617–636 (RDLAAQPSKSKKDRRGQQLS). A helical transmembrane segment spans residues 652 to 672 (LGFVSFLVFAFSSFTFIPDIE).

This sequence belongs to the peptidase S28 family.

It is found in the membrane. Its subcellular location is the secreted. The protein is Probable extracellular serine carboxypeptidase of Arthroderma benhamiae (strain ATCC MYA-4681 / CBS 112371) (Trichophyton mentagrophytes).